The sequence spans 4115 residues: Transcription-associated protein 1 (4115 aa).

The span at 1 to 11 shows a compositional bias: polar residues; that stretch reads MDPSIPSTSHR. 2 disordered regions span residues 1-21 and 543-563; these read MDPSIPSTSHRSVPPDRGVQP and ESEQKRNELPTPTKEHTKKTS. Over residues 544–563 the composition is skewed to basic and acidic residues; that stretch reads SEQKRNELPTPTKEHTKKTS. TPR repeat units follow at residues 1341–1374 and 1820–1853; these read LDGLQRFVFICPEGFEFEKDSEIYKRYLVHLLDL and QDYDMFFNVVSVFMGKFQTDFTFVREYLEVEVIP. Residues 2678-2701 form a disordered region; the sequence is LEEPEPMEVDQPKNAPAEEPKDNK. Positions 2808-3421 constitute an FAT domain; sequence LIEFISSKHE…SNGASKVSKS (614 aa). Residues 2855-2888 form a TPR 3 repeat; it reads IETLESLGALYKELAEFDQYSAIWERRSVFPETM. In terms of domain architecture, PI3K/PI4K catalytic spans 3740 to 4100; that stretch reads EPYFEIVMRG…CNSLIIRAKD (361 aa). Residues 3746–3752 form a G-loop region; sequence VMRGGQV. A catalytic loop region spans residues 3959–3967; it reads NLSPMTPHQ. The interval 3979-4006 is activation loop; the sequence is NPFYRFELGTGQLMDIEHFAHEVPFRLT. Residues 4083 to 4115 form the FATC domain; sequence DAKVKKDDCNSLIIRAKDSDNLSRMPPTYHAWF.

It belongs to the PI3/PI4-kinase family. TRA1 subfamily.

Its subcellular location is the nucleus. Functionally, influences germ cell fate in hermaphrodites. Acts downstream of tra-2 and tra-3 and through the Tip60 histone acetyltransferase complex to regulate germ cell fate decisions. Required for spermatogenesis and embryonic development. Acts with tra-2 to promote expression of fog-3 and control male tail development. Involved in the negative regulation of vulval development. The sequence is that of Transcription-associated protein 1 from Caenorhabditis briggsae.